Here is a 397-residue protein sequence, read N- to C-terminus: Formate-dependent phosphoribosylglycinamide formyltransferase (397 aa).

Residues glutamate 21–leucine 22 and glutamate 81 contribute to the N(1)-(5-phospho-beta-D-ribosyl)glycinamide site. ATP-binding positions include arginine 113, lysine 154, glutamate 194 to valine 197, and glutamate 202. Residues arginine 118–isoleucine 312 form the ATP-grasp domain. Positions 271 and 283 each coordinate Mg(2+). Residues aspartate 290, lysine 361, and arginine 368–arginine 369 contribute to the N(1)-(5-phospho-beta-D-ribosyl)glycinamide site.

Belongs to the PurK/PurT family. As to quaternary structure, homodimer.

It carries out the reaction N(1)-(5-phospho-beta-D-ribosyl)glycinamide + formate + ATP = N(2)-formyl-N(1)-(5-phospho-beta-D-ribosyl)glycinamide + ADP + phosphate + H(+). It functions in the pathway purine metabolism; IMP biosynthesis via de novo pathway; N(2)-formyl-N(1)-(5-phospho-D-ribosyl)glycinamide from N(1)-(5-phospho-D-ribosyl)glycinamide (formate route): step 1/1. Its function is as follows. Involved in the de novo purine biosynthesis. Catalyzes the transfer of formate to 5-phospho-ribosyl-glycinamide (GAR), producing 5-phospho-ribosyl-N-formylglycinamide (FGAR). Formate is provided by PurU via hydrolysis of 10-formyl-tetrahydrofolate. The polypeptide is Formate-dependent phosphoribosylglycinamide formyltransferase (Saccharolobus solfataricus (strain ATCC 35092 / DSM 1617 / JCM 11322 / P2) (Sulfolobus solfataricus)).